A 632-amino-acid chain; its full sequence is RNA-binding post-transcriptional regulator csx1 (632 aa).

Phosphoserine; by MAPK sty1 occurs at positions 42 and 54. A phosphoserine mark is found at Ser-67 and Ser-69. RRM domains follow at residues 85-167 (DTLW…WATG) and 182-261 (FSIF…VASP). The residue at position 291 (Ser-291) is a Phosphoserine; by MAPK sty1. One can recognise an RRM 3 domain in the interval 297–369 (TTVFVGGLAS…SHIRLAWGHN (73 aa)). Ser-455 carries the post-translational modification Phosphoserine; by MAPK sty1. Residues 456–476 (PPPLSRSASISPTLSGSGSGL) are disordered. Low complexity predominate over residues 466-476 (SPTLSGSGSGL).

Interacts with cip1 and cip2.

The protein localises to the cytoplasm. Its function is as follows. Regulates global gene expression after oxidative stress. Interacts and stabilizes atf1 and pcr1 mRNAs after oxidative stress, thus controlling their turnover. The protein is RNA-binding post-transcriptional regulator csx1 (csx1) of Schizosaccharomyces pombe (strain 972 / ATCC 24843) (Fission yeast).